The primary structure comprises 43 residues: Thymosin beta-b (43 aa).

Composition is skewed to basic and acidic residues over residues 1–25 and 33–43; these read MADKPDISEVSQFDKTKLKKTETQE and ETIEQEKQCEA. The disordered stretch occupies residues 1–43; it reads MADKPDISEVSQFDKTKLKKTETQEKNTLPTKETIEQEKQCEA.

The protein belongs to the thymosin beta family.

It is found in the cytoplasm. It localises to the cytoskeleton. Its function is as follows. Plays an important role in the organization of the cytoskeleton. Binds to and sequesters actin monomers (G actin) and therefore inhibits actin polymerization. This chain is Thymosin beta-b, found in Cyprinus carpio (Common carp).